A 615-amino-acid polypeptide reads, in one-letter code: Chaperone protein DnaK (615 aa).

A Phosphothreonine; by autocatalysis modification is found at Thr-175. Residues 573–615 (SQEMYQKAAQEQQAAQGAEQAQDNGPKDDNVVDADFKEVDEDK) are disordered. A compositionally biased stretch (low complexity) spans 580 to 594 (AAQEQQAAQGAEQAQ). Positions 597 to 609 (GPKDDNVVDADFK) are enriched in basic and acidic residues.

It belongs to the heat shock protein 70 family.

Its function is as follows. Acts as a chaperone. The protein is Chaperone protein DnaK of Clostridioides difficile (strain 630) (Peptoclostridium difficile).